We begin with the raw amino-acid sequence, 544 residues long: D-2-hydroxyglutarate dehydrogenase, mitochondrial (544 aa).

The N-terminal 10 residues, 1–10 (MMMPRLVPRW), are a transit peptide targeting the mitochondrion. The 180-residue stretch at 119–298 (VRGSSKVLLR…TAVSILCPPK (180 aa)) folds into the FAD-binding PCMH-type domain. Lysine 124 is modified (N6-succinyllysine). Residues arginine 409, threonine 413, and lysine 424 each coordinate (R)-2-hydroxyglutarate. Arginine 409 lines the (R)-lactate pocket. Residues arginine 409, threonine 413, and lysine 424 each contribute to the (R)-malate site. Positions 457 and 464 each coordinate Zn(2+). Asparagine 466 contacts (R)-2-hydroxyglutarate. Glutamate 498 lines the Zn(2+) pocket. Histidine 499 contacts (R)-2-hydroxyglutarate. Histidine 499 provides a ligand contact to (R)-lactate. Position 499 (histidine 499) interacts with (R)-malate.

This sequence belongs to the FAD-binding oxidoreductase/transferase type 4 family. FAD is required as a cofactor.

It localises to the mitochondrion. The catalysed reaction is (R)-2-hydroxyglutarate + A = 2-oxoglutarate + AH2. The enzyme catalyses (R)-malate + A = oxaloacetate + AH2. Activated by zinc and cobalt ions. Its function is as follows. Catalyzes the oxidation of D-2-hydroxyglutarate (D-2-HG) to alpha-ketoglutarate. Also catalyzes the oxidation of other D-2-hydroxyacids, such as D-malate (D-MAL) and D-lactate (D-LAC). Exhibits high activities towards D-2-HG and D-MAL but a very weak activity towards D-LAC. This is D-2-hydroxyglutarate dehydrogenase, mitochondrial (D2HGDH) from Bos taurus (Bovine).